Reading from the N-terminus, the 350-residue chain is Nicotinate-nucleotide--dimethylbenzimidazole phosphoribosyltransferase (350 aa).

Glutamate 316 acts as the Proton acceptor in catalysis.

Belongs to the CobT family.

It carries out the reaction 5,6-dimethylbenzimidazole + nicotinate beta-D-ribonucleotide = alpha-ribazole 5'-phosphate + nicotinate + H(+). It participates in nucleoside biosynthesis; alpha-ribazole biosynthesis; alpha-ribazole from 5,6-dimethylbenzimidazole: step 1/2. Catalyzes the synthesis of alpha-ribazole-5'-phosphate from nicotinate mononucleotide (NAMN) and 5,6-dimethylbenzimidazole (DMB). The sequence is that of Nicotinate-nucleotide--dimethylbenzimidazole phosphoribosyltransferase from Pseudomonas syringae pv. syringae (strain B728a).